Reading from the N-terminus, the 324-residue chain is Glyoxylate/hydroxypyruvate reductase B (324 aa).

Catalysis depends on residues Arg-237 and Glu-266. The Proton donor role is filled by His-285.

It belongs to the D-isomer specific 2-hydroxyacid dehydrogenase family. GhrB subfamily. Homodimer.

It localises to the cytoplasm. It catalyses the reaction glycolate + NADP(+) = glyoxylate + NADPH + H(+). It carries out the reaction (R)-glycerate + NAD(+) = 3-hydroxypyruvate + NADH + H(+). The catalysed reaction is (R)-glycerate + NADP(+) = 3-hydroxypyruvate + NADPH + H(+). In terms of biological role, catalyzes the NADPH-dependent reduction of glyoxylate and hydroxypyruvate into glycolate and glycerate, respectively. In Escherichia coli O9:H4 (strain HS), this protein is Glyoxylate/hydroxypyruvate reductase B.